Consider the following 234-residue polypeptide: Probable Ufm1-specific protease 1 (234 aa).

Active-site residues include C70, D194, and H196.

It belongs to the peptidase C78 family.

Functionally, thiol protease which recognizes and hydrolyzes the peptide bond at the C-terminal Gly of UFM1, a ubiquitin-like modifier protein bound to a number of target proteins. This Drosophila melanogaster (Fruit fly) protein is Probable Ufm1-specific protease 1.